Reading from the N-terminus, the 482-residue chain is 7-deoxyloganetic acid glucosyl transferase (482 aa).

Residue H22 is the Proton acceptor of the active site. H22 provides a ligand contact to an anthocyanidin. D127 (charge relay) is an active-site residue. Residues T149, A362, Q364, H379, W382, N383, S384, and E387 each contribute to the UDP-alpha-D-glucose site. Residue A402 participates in an anthocyanidin binding. UDP-alpha-D-glucose-binding residues include D403 and Q404.

It belongs to the UDP-glycosyltransferase family. In terms of tissue distribution, expressed in the leaf internal phloem-associated parenchyma (IPAP) inside the mesophyll. Mostly observed in leaves, roots and stems, and, to a lower extent, in flowers.

It is found in the nucleus. Its subcellular location is the cytoplasm. The protein localises to the cytosol. The catalysed reaction is 7-deoxyloganetate + UDP-alpha-D-glucose = 7-deoxyloganate + UDP + H(+). It participates in alkaloid biosynthesis. Component of the seco-iridoid and derivatives monoterpenoid indole alkaloids (MIAs, e.g. vincristine, quinine, and strychnine) biosynthesis pathway. Catalyzes the glucosylation of 7-deoxyloganetic acid to form 7-deoxyloganic acid using UDP-glucose as the sugar donor. Inactive with loganetic acid, loganetin, iridodial, iridotrial, 8-OH-geraniol, jasmonic acid, gibberellic acid, indole acetic acid, salicylic acid, abscisic acid, zeatin and luteolin. The chain is 7-deoxyloganetic acid glucosyl transferase from Catharanthus roseus (Madagascar periwinkle).